The primary structure comprises 197 residues: Imidazoleglycerol-phosphate dehydratase (197 aa).

Belongs to the imidazoleglycerol-phosphate dehydratase family.

The protein localises to the cytoplasm. It catalyses the reaction D-erythro-1-(imidazol-4-yl)glycerol 3-phosphate = 3-(imidazol-4-yl)-2-oxopropyl phosphate + H2O. It participates in amino-acid biosynthesis; L-histidine biosynthesis; L-histidine from 5-phospho-alpha-D-ribose 1-diphosphate: step 6/9. The protein is Imidazoleglycerol-phosphate dehydratase of Rhodopseudomonas palustris (strain ATCC BAA-98 / CGA009).